The sequence spans 141 residues: Large ribosomal subunit protein uL22 (141 aa).

The segment at 108-141 is disordered; the sequence is KSEEKKTVAKKTTTTKAPAKKTTSTKKATVKKES. Low complexity predominate over residues 117–134; sequence KKTTTTKAPAKKTTSTKK.

This sequence belongs to the universal ribosomal protein uL22 family. As to quaternary structure, part of the 50S ribosomal subunit.

Functionally, this protein binds specifically to 23S rRNA; its binding is stimulated by other ribosomal proteins, e.g. L4, L17, and L20. It is important during the early stages of 50S assembly. It makes multiple contacts with different domains of the 23S rRNA in the assembled 50S subunit and ribosome. In terms of biological role, the globular domain of the protein is located near the polypeptide exit tunnel on the outside of the subunit, while an extended beta-hairpin is found that lines the wall of the exit tunnel in the center of the 70S ribosome. The polypeptide is Large ribosomal subunit protein uL22 (Campylobacter jejuni subsp. jejuni serotype O:2 (strain ATCC 700819 / NCTC 11168)).